The primary structure comprises 93 residues: Large ribosomal subunit protein bL31 (93 aa).

The interval 72–93 is disordered; it reads VKTVSSNADNQKETTEELIKNK. The span at 81–93 shows a compositional bias: basic and acidic residues; it reads NQKETTEELIKNK.

This sequence belongs to the bacterial ribosomal protein bL31 family. Type A subfamily. In terms of assembly, part of the 50S ribosomal subunit.

In terms of biological role, binds the 23S rRNA. In Onion yellows phytoplasma (strain OY-M), this protein is Large ribosomal subunit protein bL31.